A 300-amino-acid chain; its full sequence is QVTGNGHVQSLAFPNSYPRNLLLTWRLHSQEKTRIQLAFDHQFGLEEAENDICRYDFVEVEDISETSTVIRGRWCGHKEVPPRITSRTNQIKITFKSDDYFVAKPGFKIYYSFVEDFQPAAASETNWESVTSSISGVSYHNPSVTDPTLTADALDKTIAEFDTVEDLLKHFNPESWQEDLENLYLDTPHYRGRSYHDRKSKVDLDRLNDDAKRYSCTPRNYSVNLREELKLTNVVFFPRCLLVQRCGGNCGCGTVNWKSCTCSSGKTVKKYHEVLKFEPGHFKRRNRAKNMALVDIQLDH.

In terms of domain architecture, CUB spans 1–114 (QVTGNGHVQS…PGFKIYYSFV (114 aa)). A disulfide bond links cysteine 53 and cysteine 75. A glycan (N-linked (GlcNAc...) asparagine) is linked at asparagine 220.

The protein belongs to the PDGF/VEGF growth factor family. In terms of assembly, homodimer; disulfide-linked. Interacts with PDGFRB homodimers, and with heterodimers formed by PDGFRA and PDGFRB. In terms of processing, activated by proteolytic cleavage. Proteolytic removal of the N-terminal CUB domain releasing the core domain is necessary for unmasking the receptor-binding epitopes of the core domain. Cleavage after Arg-191 or Arg-193 by urokinase plasminogen activator gives rise to the active form.

It localises to the secreted. Functionally, growth factor that plays an essential role in the regulation of embryonic development, cell proliferation, cell migration, survival and chemotaxis. Potent mitogen for cells of mesenchymal origin. Plays an important role in wound healing. Induces macrophage recruitment, increased interstitial pressure, and blood vessel maturation during angiogenesis. Can initiate events that lead to a mesangial proliferative glomerulonephritis, including influx of monocytes and macrophages and production of extracellular matrix. This is Platelet-derived growth factor D (PDGFD) from Oryctolagus cuniculus (Rabbit).